Here is a 517-residue protein sequence, read N- to C-terminus: Crotonobetaine/carnitine--CoA ligase (517 aa).

It belongs to the ATP-dependent AMP-binding enzyme family.

It catalyses the reaction 4-(trimethylamino)butanoate + ATP + CoA = 4-(trimethylamino)butanoyl-CoA + AMP + diphosphate. The catalysed reaction is crotonobetaine + ATP + CoA = crotonobetainyl-CoA + AMP + diphosphate. The enzyme catalyses (R)-carnitine + ATP + CoA = (R)-carnitinyl-CoA + AMP + diphosphate. Its pathway is amine and polyamine metabolism; carnitine metabolism. Functionally, catalyzes the transfer of CoA to carnitine, generating the initial carnitinyl-CoA needed for the CaiB reaction cycle. Also has activity toward crotonobetaine and gamma-butyrobetaine. This is Crotonobetaine/carnitine--CoA ligase from Shigella flexneri.